Reading from the N-terminus, the 445-residue chain is Type II methyltransferase M.Bpa9945I (445 aa).

Residues 1 to 444 form the SAM-dependent MTase C5-type domain; sequence MIVIDLFSGA…RAVKDVINGH (444 aa). Residue Cys136 is part of the active site.

Belongs to the class I-like SAM-binding methyltransferase superfamily. C5-methyltransferase family.

Its subcellular location is the cytoplasm. It carries out the reaction a 2'-deoxycytidine in DNA + S-adenosyl-L-methionine = a 5-methyl-2'-deoxycytidine in DNA + S-adenosyl-L-homocysteine + H(+). In terms of biological role, component of antiviral defense system DISARM (defense island system associated with restriction-modification), composed of DrmE, DrmA, DrmB, DrmC and DrmMII. DISARM is probably a multi-gene restriction module, this subunit is a DNA methylase. Expression of DISARM in B.subtilis (strain BEST7003) confers resistance to phages Nf, phi29, phi105, phi3T, SPO1, SPR and SPP1. Protection is over 10(7)-fold against phi3T, 10(4)-10(5)-fold against Nf, phi29, phi105 and SPR, 100-fold against SPO1 and 10-fold against SPP1. DISARM does not interfere with phage adsorption, but instead interferes with (phi3T) DNA replication early in its cycle, preventing replication, circularization and lysogeny and probably causes phage DNA degradation (DNA is degraded in SPP1-infected cells). Expression of this methylase alone leads to highly methylated phage, however they are still susceptible to the DISARM system. Its function is as follows. A methylase, recognizes the double-stranded sequence 5'-CCWGG-3', methylates C-2 on both strands. Phage Nf does not have any 5'-CCWGG-3' motifs but is still targeted by the DISARM system. This chain is Type II methyltransferase M.Bpa9945I, found in Bacillus paralicheniformis (strain ATCC 9945a / NCIMB 11709 / CD-2).